A 231-amino-acid chain; its full sequence is LexA repressor (231 aa).

Residues 26-46 constitute a DNA-binding region (H-T-H motif); the sequence is FDEMKDALDLRSKSGIHRLIT. Residues serine 152 and lysine 190 each act as for autocatalytic cleavage activity in the active site.

Belongs to the peptidase S24 family. Homodimer.

The catalysed reaction is Hydrolysis of Ala-|-Gly bond in repressor LexA.. Its function is as follows. Represses a number of genes involved in the response to DNA damage (SOS response), including recA and lexA. In the presence of single-stranded DNA, RecA interacts with LexA causing an autocatalytic cleavage which disrupts the DNA-binding part of LexA, leading to derepression of the SOS regulon and eventually DNA repair. The protein is LexA repressor of Dinoroseobacter shibae (strain DSM 16493 / NCIMB 14021 / DFL 12).